A 143-amino-acid polypeptide reads, in one-letter code: Large ribosomal subunit protein uL15 (143 aa).

The disordered stretch occupies residues 1 to 52 (MKLNTLAPAAGSKSAPKRLGRGIGSGLGKTSGKGHKGQKARSGGYHKVGFEG). A compositionally biased stretch (gly residues) spans 21–31 (RGIGSGLGKTS).

Belongs to the universal ribosomal protein uL15 family. Part of the 50S ribosomal subunit.

Functionally, binds to the 23S rRNA. The polypeptide is Large ribosomal subunit protein uL15 (Francisella tularensis subsp. holarctica (strain FTNF002-00 / FTA)).